A 341-amino-acid chain; its full sequence is Protein BIG GRAIN 1-like C (341 aa).

Disordered regions lie at residues 28-61 (DGLQSDLKGSINENVSSSSSSPSPNKKDDKLTTL) and 76-138 (SSTT…SDDD). Over residues 52–61 (NKKDDKLTTL) the composition is skewed to basic and acidic residues. Over residues 76–92 (SSTTTTNSSDSSSFSSS) the composition is skewed to low complexity. Residues 105-138 (KLAEQGKRSGDERQRTKRTVMDNDSRLFSKSDDD) are compositionally biased toward basic and acidic residues.

The protein belongs to the BIG GRAIN 1 (BG1) plant protein family.

Its subcellular location is the cell membrane. In terms of biological role, involved in auxin transport. Regulator of the auxin signaling pathway. This Arabidopsis thaliana (Mouse-ear cress) protein is Protein BIG GRAIN 1-like C.